We begin with the raw amino-acid sequence, 185 residues long: uncharacterized protein (185 aa).

Residues 1–18 (MLLKLILILCFLVTLSLS) form the signal peptide. A disordered region spans residues 30–185 (TQGPTIASGG…VQDCGEITGW (156 aa)). Basic and acidic residues predominate over residues 86-101 (RAQEGGKKDTTKEQPK). Residues 103-116 (NNNNKNLGRHSSSG) show a composition bias toward low complexity. The segment covering 117–135 (SGSGSGSGCGVTGDTGTGS) has biased composition (gly residues).

The protein resides in the secreted. This is an uncharacterized protein from Dictyostelium discoideum (Social amoeba).